The sequence spans 604 residues: Prostaglandin G/H synthase 2 (604 aa).

The first 17 residues, Met-1–Thr-17, serve as a signal peptide directing secretion. The region spanning Ala-18–Ser-55 is the EGF-like domain. Cystine bridges form between Cys-21/Cys-32, Cys-22/Cys-145, Cys-26/Cys-42, and Cys-44/Cys-54. A glycan (N-linked (GlcNAc...) asparagine) is linked at Asn-53. Position 106 (Arg-106) interacts with substrate. N-linked (GlcNAc...) asparagine glycosylation is present at Asn-130. The active-site Proton acceptor is the His-193. Tyr-341 is a substrate binding site. The active-site For cyclooxygenase activity is Tyr-371. His-374 provides a ligand contact to heme b. N-linked (GlcNAc...) asparagine glycosylation occurs at Asn-396. The residue at position 526 (Cys-526) is an S-nitrosocysteine. Residues Cys-555 and Cys-561 are joined by a disulfide bond. The residue at position 565 (Ser-565) is an O-acetylserine. Asn-580 is a glycosylation site (N-linked (GlcNAc...) asparagine).

This sequence belongs to the prostaglandin G/H synthase family. Homodimer. Heme b serves as cofactor. In terms of processing, S-nitrosylation by NOS2 (iNOS) activates enzyme activity. S-nitrosylation may take place on different Cys residues in addition to Cys-526. Post-translationally, acetylated at Ser-565 by SPHK1. During neuroinflammation, acetylation by SPHK1 promotes neuronal secretion of specialized preresolving mediators (SPMs), especially 15-R-lipoxin A4, which results in an increase of phagocytic microglia.

The protein localises to the microsome membrane. The protein resides in the endoplasmic reticulum membrane. It is found in the nucleus inner membrane. It localises to the nucleus outer membrane. The enzyme catalyses (5Z,8Z,11Z,14Z)-eicosatetraenoate + AH2 + 2 O2 = prostaglandin H2 + A + H2O. It catalyses the reaction (5Z,8Z,11Z,14Z)-eicosatetraenoate + 2 O2 = prostaglandin G2. The catalysed reaction is prostaglandin G2 + AH2 = prostaglandin H2 + A + H2O. It carries out the reaction (5Z,8Z,11Z,14Z,17Z)-eicosapentaenoate + 2 O2 = prostaglandin G3. The enzyme catalyses prostaglandin G3 + AH2 = prostaglandin H3 + A + H2O. It catalyses the reaction (8Z,11Z,14Z)-eicosatrienoate + 2 O2 = prostaglandin G1. The catalysed reaction is prostaglandin G1 + AH2 = prostaglandin H1 + A + H2O. It carries out the reaction 2-(5Z,8Z,11Z,14Z)-eicosatetraenoyl-sn-glycero-3-phosphoethanolamine + 2 O2 = 2-(prostaglandin G2)-sn-glycero-3-phosphoethanolamine. The enzyme catalyses 2-(prostaglandin G2)-sn-glycero-3-phosphoethanolamine + AH2 = 2-(prostaglandin H2)-sn-glycero-3-phosphoethanolamine + A + H2O. It catalyses the reaction 2-(5Z,8Z,11Z,14Z)-eicosatetraenoyl-sn-glycero-3-phosphocholine + 2 O2 = 2-(prostaglandin G2)-sn-glycero-3-phosphocholine. The catalysed reaction is 2-(prostaglandin G2)-sn-glycero-3-phosphocholine + AH2 = 2-(prostaglandin H2)-sn-glycero-3-phosphocholine + A + H2O. It carries out the reaction (15S)-hydroperoxy-(5Z,8Z,11Z,13E)-eicosatetraenoate + AH2 = (15S)-hydroxy-(5Z,8Z,11Z,13E)-eicosatetraenoate + A + H2O. The enzyme catalyses 2-(5Z,8Z,11Z,14Z)-eicosatetraenoyl-sn-glycero-3-phosphocholine + AH2 + O2 = 2-[(15S)-hydroxy-(5Z,8Z,11Z,13E)-eicosatetraenoyl]-sn-glycero-3-phosphocholine + A + H2O. It catalyses the reaction 2-(5Z,8Z,11Z,14Z)-eicosatetraenoyl-sn-glycero-3-phosphocholine + AH2 + O2 = 2-[(15R)-hydroxy-(5Z,8Z,11Z,13E)-eicosatetraenoyl]-sn-glycero-3-phosphocholine + A + H2O. The catalysed reaction is 2-(5Z,8Z,11Z,14Z)-eicosatetraenoyl-sn-glycero-3-phosphocholine + AH2 + O2 = 2-[(11R)-hydroxy-(5Z,8Z,12E,14Z)-eicosatetraenoyl]-sn-glycero-3-phosphocholine + A + H2O. It carries out the reaction (9Z,12Z)-octadecadienoate + AH2 + O2 = 9-hydroxy-(10E,12Z)-octadecadienoate + A + H2O. The enzyme catalyses (9Z,12Z)-octadecadienoate + AH2 + O2 = 13-hydroxy-(9Z,11E)-octadecadienoate + A + H2O. It catalyses the reaction (5Z,8Z,11Z,14Z)-eicosatetraenoate + AH2 + O2 = (15R)-hydroxy-(5Z,8Z,11Z,13E)-eicosatetraenoate + A + H2O. The catalysed reaction is (5Z,8Z,11Z,14Z)-eicosatetraenoate + AH2 + O2 = (11R)-hydroxy-(5Z,8Z,12E,14Z)-eicosatetraenoate + A + H2O. It carries out the reaction (5Z,8Z,11Z,14Z,17Z)-eicosapentaenoate + AH2 + O2 = (11R)-hydroxy-(5Z,8Z,12E,14Z,17Z)-eicosapentaenoate + A + H2O. The enzyme catalyses (5Z,8Z,11Z,14Z,17Z)-eicosapentaenoate + AH2 + O2 = (18S)-hydroxy-(5Z,8Z,11Z,14Z,16E)-eicosapentaenoate + A + H2O. It catalyses the reaction (5Z,8Z,11Z,14Z,17Z)-eicosapentaenoate + AH2 + O2 = (18R)-hydroxy-(5Z,8Z,11Z,14Z,16E)-eicosapentaenoate + A + H2O. The catalysed reaction is (5Z,8Z,11Z,14Z,17Z)-eicosapentaenoate + AH2 + O2 = (15R)-hydroxy-(5Z,8Z,11Z,13E,17Z)-eicosapentaenoate + A + H2O. It carries out the reaction (5Z,8Z,11Z,14Z,17Z)-eicosapentaenoate + AH2 + O2 = (15S)-hydroxy-(5Z,8Z,11Z,13E,17Z)-eicosapentaenoate + A + H2O. The enzyme catalyses (7Z,10Z,13Z,16Z,19Z)-docosapentaenoate + AH2 + O2 = 13R-hydroxy-(7Z,10Z,14E,16Z,19Z)-docosapentaenoate + A + H2O. It catalyses the reaction (4Z,7Z,10Z,13Z,16Z,19Z)-docosahexaenoate + AH2 + O2 = 13-hydroxy-(4Z,7Z,10Z,14E,16Z,19Z)-docosahexaenoate + A + H2O. The catalysed reaction is (5S)-hydroxy-(6E,8Z,11Z,14Z)-eicosatetraenoate + AH2 + O2 = (5S,15R)-dihydroxy-(6E,8Z,11Z,13E)-eicosatetraenoate + A + H2O. It carries out the reaction (4Z,7Z,10Z,13Z,16Z,19Z)-docosahexaenoate + AH2 + O2 = 17R-hydroxy-(4Z,7Z,10Z,13Z,15E,19Z)-docosahexaenoate + A + H2O. The enzyme catalyses (5S)-hydroxy-(6E,8Z,11Z,14Z)-eicosatetraenoate + AH2 + O2 = (5S,15S)-dihydroxy-(6E,8Z,11Z,13E)-eicosatetraenoate + A + H2O. It catalyses the reaction (5S)-hydroxy-(6E,8Z,11Z,14Z)-eicosatetraenoate + AH2 + O2 = (5S,11R)-dihydroxy-(6E,8Z,12E,14Z)-eicosatetraenoate + A + H2O. The catalysed reaction is 2-(5Z,8Z,11Z,14Z-eicosatetraenoyl)-glycerol + 2 O2 = 2-glyceryl-prostaglandin G2. It carries out the reaction 2-glyceryl-prostaglandin G2 + AH2 = 2-glyceryl-prostaglandin H2 + A + H2O. The enzyme catalyses (5Z,8Z,11Z,14Z)-eicosatetraenoate + O2 = (15R)-hydroperoxy-(5Z,8Z,11Z,13E)-eicosatetraenoate. It catalyses the reaction (5Z,8Z,11Z,14Z)-eicosatetraenoate + O2 = 11R-hydroperoxy-(5Z,8Z,12E,14Z)-eicosatetraenoate. The catalysed reaction is (9Z,12Z)-octadecadienoate + AH2 + O2 = (9R)-hydroxy-(10E,12Z)-octadecadienoate + A + H2O. It carries out the reaction (9Z,12Z)-octadecadienoate + AH2 + O2 = (9S)-hydroxy-(10E,12Z)-octadecadienoate + A + H2O. The enzyme catalyses (9Z,12Z)-octadecadienoate + AH2 + O2 = (13S)-hydroxy-(9Z,11E)-octadecadienoate + A + H2O. It catalyses the reaction (9Z,12Z)-octadecadienoate + AH2 + O2 = (13R)-hydroxy-(9Z,11E)-octadecadienoate + A + H2O. Its pathway is lipid metabolism; prostaglandin biosynthesis. With respect to regulation, the cyclooxygenase activity is inhibited by nonsteroidal anti-inflammatory drugs (NSAIDs) including aspirin, ibuprofen, flurbiprofen, celecoxib, flufenamic, mefenamic and tolfenamic acids as well as by hydroperoxide scavenger erythrocyte glutathione peroxidase GPX1. Aspirin triggers enzyme acetylation turning off its ability to generate pro-inflammatory prostaglandins, but switches on its capacity to produce anti-inflammatory lipid mediators involved in inflammation resolution. Aspirin enhances lipoxygenase-type activity toward production of epimers with R stereochemistry such as 15R-HETE, 18R-HEPE, 15R-HEPE and 17R-HDHA. Atorvastatin, a cholesterol-lowering drug, triggers enzyme S-nitrosylation increasing production of 13-series resolvins (RvTs). In terms of biological role, dual cyclooxygenase and peroxidase in the biosynthesis pathway of prostanoids, a class of C20 oxylipins mainly derived from arachidonate ((5Z,8Z,11Z,14Z)-eicosatetraenoate, AA, C20:4(n-6)), with a particular role in the inflammatory response. The cyclooxygenase activity oxygenates AA to the hydroperoxy endoperoxide prostaglandin G2 (PGG2), and the peroxidase activity reduces PGG2 to the hydroxy endoperoxide prostaglandin H2 (PGH2), the precursor of all 2-series prostaglandins and thromboxanes. This complex transformation is initiated by abstraction of hydrogen at carbon 13 (with S-stereochemistry), followed by insertion of molecular O2 to form the endoperoxide bridge between carbon 9 and 11 that defines prostaglandins. The insertion of a second molecule of O2 (bis-oxygenase activity) yields a hydroperoxy group in PGG2 that is then reduced to PGH2 by two electrons. Similarly catalyzes successive cyclooxygenation and peroxidation of dihomo-gamma-linoleate (DGLA, C20:3(n-6)) and eicosapentaenoate (EPA, C20:5(n-3)) to corresponding PGH1 and PGH3, the precursors of 1- and 3-series prostaglandins. In an alternative pathway of prostanoid biosynthesis, converts 2-arachidonoyl lysophopholipids to prostanoid lysophopholipids, which are then hydrolyzed by intracellular phospholipases to release free prostanoids. Metabolizes 2-arachidonoyl glycerol yielding the glyceryl ester of PGH2, a process that can contribute to pain response. Generates lipid mediators from n-3 and n-6 polyunsaturated fatty acids (PUFAs) via a lipoxygenase-type mechanism. Oxygenates PUFAs to hydroperoxy compounds and then reduces them to corresponding alcohols. Plays a role in the generation of resolution phase interaction products (resolvins) during both sterile and infectious inflammation. Metabolizes docosahexaenoate (DHA, C22:6(n-3)) to 17R-HDHA, a precursor of the D-series resolvins (RvDs). As a component of the biosynthetic pathway of E-series resolvins (RvEs), converts eicosapentaenoate (EPA, C20:5(n-3)) primarily to 18S-HEPE that is further metabolized by ALOX5 and LTA4H to generate 18S-RvE1 and 18S-RvE2. In vascular endothelial cells, converts docosapentaenoate (DPA, C22:5(n-3)) to 13R-HDPA, a precursor for 13-series resolvins (RvTs) shown to activate macrophage phagocytosis during bacterial infection. In activated leukocytes, contributes to oxygenation of hydroxyeicosatetraenoates (HETE) to diHETES (5,15-diHETE and 5,11-diHETE). Can also use linoleate (LA, (9Z,12Z)-octadecadienoate, C18:2(n-6)) as substrate and produce hydroxyoctadecadienoates (HODEs) in a regio- and stereospecific manner, being (9R)-HODE ((9R)-hydroxy-(10E,12Z)-octadecadienoate) and (13S)-HODE ((13S)-hydroxy-(9Z,11E)-octadecadienoate) its major products. During neuroinflammation, plays a role in neuronal secretion of specialized preresolving mediators (SPMs) 15R-lipoxin A4 that regulates phagocytic microglia. This chain is Prostaglandin G/H synthase 2, found in Homo sapiens (Human).